The sequence spans 91 residues: Large ribosomal subunit protein eL37 (91 aa).

Zn(2+) contacts are provided by C19, C22, C34, and C37. The segment at 19–37 (CKRCGKSSFHIQKKRCASC) adopts a C4-type zinc-finger fold.

It belongs to the eukaryotic ribosomal protein eL37 family. Zn(2+) is required as a cofactor.

Functionally, binds to the 23S rRNA. This Caenorhabditis elegans protein is Large ribosomal subunit protein eL37.